The primary structure comprises 335 residues: Deoxyhypusine hydroxylase (335 aa).

HEAT-like PBS-type repeat units lie at residues 74-100, 107-133, 203-233, 241-267, and 274-301; these read LKHE…VLED, CRHE…LRDD, KRYR…LAEG, FRHE…TLSD, and VRHE…FVND. Positions 76, 77, 109, and 110 each coordinate Fe cation. The Fe cation site is built by histidine 243, glutamate 244, histidine 276, and glutamate 277.

This sequence belongs to the deoxyhypusine hydroxylase family. Fe(2+) is required as a cofactor.

The protein resides in the cytoplasm. It is found in the nucleus. The enzyme catalyses [eIF5A protein]-deoxyhypusine + AH2 + O2 = [eIF5A protein]-hypusine + A + H2O. Its pathway is protein modification; eIF5A hypusination. Functionally, catalyzes the hydroxylation of the N(6)-(4-aminobutyl)-L-lysine intermediate to form hypusine, an essential post-translational modification only found in mature eIF-5A factor. The chain is Deoxyhypusine hydroxylase from Coccidioides immitis (strain RS) (Valley fever fungus).